The primary structure comprises 217 residues: Thiamine-phosphate synthase (217 aa).

4-amino-2-methyl-5-(diphosphooxymethyl)pyrimidine is bound by residues 42 to 46 (QYRDK) and D77. Mg(2+)-binding residues include D78 and D97. S116 contacts 4-amino-2-methyl-5-(diphosphooxymethyl)pyrimidine. 143 to 145 (TTS) lines the 2-[(2R,5Z)-2-carboxy-4-methylthiazol-5(2H)-ylidene]ethyl phosphate pocket. Residue K146 participates in 4-amino-2-methyl-5-(diphosphooxymethyl)pyrimidine binding. 2-[(2R,5Z)-2-carboxy-4-methylthiazol-5(2H)-ylidene]ethyl phosphate-binding positions include G174 and 194–195 (IS).

Belongs to the thiamine-phosphate synthase family. Mg(2+) serves as cofactor.

It catalyses the reaction 2-[(2R,5Z)-2-carboxy-4-methylthiazol-5(2H)-ylidene]ethyl phosphate + 4-amino-2-methyl-5-(diphosphooxymethyl)pyrimidine + 2 H(+) = thiamine phosphate + CO2 + diphosphate. The enzyme catalyses 2-(2-carboxy-4-methylthiazol-5-yl)ethyl phosphate + 4-amino-2-methyl-5-(diphosphooxymethyl)pyrimidine + 2 H(+) = thiamine phosphate + CO2 + diphosphate. The catalysed reaction is 4-methyl-5-(2-phosphooxyethyl)-thiazole + 4-amino-2-methyl-5-(diphosphooxymethyl)pyrimidine + H(+) = thiamine phosphate + diphosphate. Its pathway is cofactor biosynthesis; thiamine diphosphate biosynthesis; thiamine phosphate from 4-amino-2-methyl-5-diphosphomethylpyrimidine and 4-methyl-5-(2-phosphoethyl)-thiazole: step 1/1. In terms of biological role, condenses 4-methyl-5-(beta-hydroxyethyl)thiazole monophosphate (THZ-P) and 2-methyl-4-amino-5-hydroxymethyl pyrimidine pyrophosphate (HMP-PP) to form thiamine monophosphate (TMP). The chain is Thiamine-phosphate synthase from Lactiplantibacillus plantarum (strain ATCC BAA-793 / NCIMB 8826 / WCFS1) (Lactobacillus plantarum).